We begin with the raw amino-acid sequence, 407 residues long: Protease ElaD (407 aa).

The active site involves H231. Catalysis depends on C317, which acts as the Nucleophile.

It belongs to the peptidase C79 family.

Protease that can act as an efficient and specific deubiquitinating enzyme in vitro. Does not possess desumoylating and deneddylating activities. The physiological substrate is unknown. This chain is Protease ElaD (elaD), found in Escherichia coli O157:H7.